Consider the following 908-residue polypeptide: Translation initiation factor IF-2 (908 aa).

The segment at 52–318 (QSHGQEEKRR…RSSQSSQHKF (267 aa)) is disordered. Residues 65 to 84 (KSKTTSTARVTGSSGKSKSV) are compositionally biased toward polar residues. Basic and acidic residues-rich tracts occupy residues 94–108 (FEKPDPEKMAEELAA), 120–138 (AAKDAEDRAATKKKSEERQ), 176–185 (IEVKPKDQPK), 193–238 (PKVE…EQMR), 270–280 (SFEKERREIKR), and 294–303 (KNQDEREIKN). A tr-type G domain is found at 409 to 578 (TRPPVVTIMG…SLQAELMELE (170 aa)). A G1 region spans residues 418-425 (GHVDHGKT). 418–425 (GHVDHGKT) lines the GTP pocket. The segment at 443-447 (GITQH) is G2. A G3 region spans residues 464 to 467 (DTPG). GTP is bound by residues 464-468 (DTPGH) and 518-521 (NKMD). The tract at residues 518–521 (NKMD) is G4. The segment at 554–556 (SAK) is G5.

Belongs to the TRAFAC class translation factor GTPase superfamily. Classic translation factor GTPase family. IF-2 subfamily.

The protein resides in the cytoplasm. Functionally, one of the essential components for the initiation of protein synthesis. Protects formylmethionyl-tRNA from spontaneous hydrolysis and promotes its binding to the 30S ribosomal subunits. Also involved in the hydrolysis of GTP during the formation of the 70S ribosomal complex. The polypeptide is Translation initiation factor IF-2 (Psychrobacter cryohalolentis (strain ATCC BAA-1226 / DSM 17306 / VKM B-2378 / K5)).